The chain runs to 484 residues: Putative beta-barrel assembly-enhancing protease (484 aa).

A signal peptide spans 1–23 (MKFFPTRTLLCLCIAAPCLPAIA). A Zn(2+)-binding site is contributed by His-133. The active site involves Glu-134. The Zn(2+) site is built by His-137 and Glu-198. The Proton donor role is filled by Asp-202. 4 TPR repeats span residues 307-340 (PSIQ…QPDN), 341-374 (HFYL…TPNN), 376-408 (VLTI…NPND), and 426-459 (AEDL…VELG).

The protein belongs to the peptidase M48 family. BepA subfamily. It depends on Zn(2+) as a cofactor.

The protein localises to the periplasm. Functions both as a chaperone and a metalloprotease. Maintains the integrity of the outer membrane by promoting either the assembly or the elimination of outer membrane proteins, depending on their folding state. The sequence is that of Putative beta-barrel assembly-enhancing protease from Vibrio cholerae serotype O1 (strain ATCC 39315 / El Tor Inaba N16961).